The primary structure comprises 36 residues: Mu/omega-theraphotoxin-Pmu1a (36 aa).

3 disulfides stabilise this stretch: Cys-2–Cys-16, Cys-9–Cys-21, and Cys-15–Cys-29.

Belongs to the neurotoxin 10 (Hwtx-1) family. As to expression, expressed by the venom gland.

It is found in the secreted. Gating-modifier toxin that targets both voltage-gated sodium and calcium channels, with described activities on human Nav1.7/SCN9A (IC(50)=5.5-7 nM), hNav1.6/SCN10A (IC(50)=9.9 nM), hNav1.4/SCN4A (IC(50)=62.9 nM), hCav3.2/CACNA1H (IC(50)=955.4 nM or 63.5% inhibition at 10 uM), hCav3.1/CACNA1G (95.1% inhibition at 10 uM), hCav3.3/CACNA1I (90.8% inhibition at 10 uM). Acts on Cav3 currents mainly by inducing a strong depolarizing shift in the current-voltage curve. The chain is Mu/omega-theraphotoxin-Pmu1a from Pterinochilus murinus (Mombasa golden starburst baboon spider).